A 212-amino-acid polypeptide reads, in one-letter code: Thiamine-phosphate synthase (212 aa).

Residues 40-44 and asparagine 75 contribute to the 4-amino-2-methyl-5-(diphosphooxymethyl)pyrimidine site; that span reads QFREK. Mg(2+) contacts are provided by aspartate 76 and aspartate 95. Serine 113 serves as a coordination point for 4-amino-2-methyl-5-(diphosphooxymethyl)pyrimidine. 139–141 is a binding site for 2-[(2R,5Z)-2-carboxy-4-methylthiazol-5(2H)-ylidene]ethyl phosphate; sequence TIS. Lysine 142 contacts 4-amino-2-methyl-5-(diphosphooxymethyl)pyrimidine. 2-[(2R,5Z)-2-carboxy-4-methylthiazol-5(2H)-ylidene]ethyl phosphate is bound by residues glycine 171 and 191-192; that span reads IS.

This sequence belongs to the thiamine-phosphate synthase family. Mg(2+) serves as cofactor.

The catalysed reaction is 2-[(2R,5Z)-2-carboxy-4-methylthiazol-5(2H)-ylidene]ethyl phosphate + 4-amino-2-methyl-5-(diphosphooxymethyl)pyrimidine + 2 H(+) = thiamine phosphate + CO2 + diphosphate. It carries out the reaction 2-(2-carboxy-4-methylthiazol-5-yl)ethyl phosphate + 4-amino-2-methyl-5-(diphosphooxymethyl)pyrimidine + 2 H(+) = thiamine phosphate + CO2 + diphosphate. It catalyses the reaction 4-methyl-5-(2-phosphooxyethyl)-thiazole + 4-amino-2-methyl-5-(diphosphooxymethyl)pyrimidine + H(+) = thiamine phosphate + diphosphate. The protein operates within cofactor biosynthesis; thiamine diphosphate biosynthesis; thiamine phosphate from 4-amino-2-methyl-5-diphosphomethylpyrimidine and 4-methyl-5-(2-phosphoethyl)-thiazole: step 1/1. Functionally, condenses 4-methyl-5-(beta-hydroxyethyl)thiazole monophosphate (THZ-P) and 2-methyl-4-amino-5-hydroxymethyl pyrimidine pyrophosphate (HMP-PP) to form thiamine monophosphate (TMP). This Staphylococcus haemolyticus (strain JCSC1435) protein is Thiamine-phosphate synthase.